The sequence spans 812 residues: Probable phosphoketolase (812 aa).

It belongs to the XFP family. The cofactor is thiamine diphosphate.

This Thermosynechococcus vestitus (strain NIES-2133 / IAM M-273 / BP-1) protein is Probable phosphoketolase.